A 172-amino-acid polypeptide reads, in one-letter code: Crossover junction endodeoxyribonuclease RuvC (172 aa).

Residues D12, E71, and D143 contribute to the active site. Mg(2+) contacts are provided by D12, E71, and D143.

Belongs to the RuvC family. As to quaternary structure, homodimer which binds Holliday junction (HJ) DNA. The HJ becomes 2-fold symmetrical on binding to RuvC with unstacked arms; it has a different conformation from HJ DNA in complex with RuvA. In the full resolvosome a probable DNA-RuvA(4)-RuvB(12)-RuvC(2) complex forms which resolves the HJ. It depends on Mg(2+) as a cofactor.

The protein localises to the cytoplasm. The catalysed reaction is Endonucleolytic cleavage at a junction such as a reciprocal single-stranded crossover between two homologous DNA duplexes (Holliday junction).. Functionally, the RuvA-RuvB-RuvC complex processes Holliday junction (HJ) DNA during genetic recombination and DNA repair. Endonuclease that resolves HJ intermediates. Cleaves cruciform DNA by making single-stranded nicks across the HJ at symmetrical positions within the homologous arms, yielding a 5'-phosphate and a 3'-hydroxyl group; requires a central core of homology in the junction. The consensus cleavage sequence is 5'-(A/T)TT(C/G)-3'. Cleavage occurs on the 3'-side of the TT dinucleotide at the point of strand exchange. HJ branch migration catalyzed by RuvA-RuvB allows RuvC to scan DNA until it finds its consensus sequence, where it cleaves and resolves the cruciform DNA. This is Crossover junction endodeoxyribonuclease RuvC from Coxiella burnetii (strain CbuK_Q154) (Coxiella burnetii (strain Q154)).